The following is a 610-amino-acid chain: Putative sensor histidine kinase NtrY-like (610 aa).

A run of 4 helical transmembrane segments spans residues 18-38 (IGIL…TISI), 49-69 (KVIW…ILLT), 92-112 (IVVA…ISSA), and 292-312 (IIFI…GVIV). The HAMP domain occupies 314–368 (AKIVNPIKKLVIATDKVKSGDLTVQVPENEVDKDEIGTLYAAFNRMIKQLSRQQR). A Histidine kinase domain is found at 385 to 596 (KVAHEIKNPL…VIDIRFNLEE (212 aa)). His-388 carries the post-translational modification Phosphohistidine; by autocatalysis.

It is found in the cell membrane. It catalyses the reaction ATP + protein L-histidine = ADP + protein N-phospho-L-histidine.. Member of the two-component regulatory system RBE_0470/RBE_0312. The protein is Putative sensor histidine kinase NtrY-like of Rickettsia bellii (strain RML369-C).